A 238-amino-acid polypeptide reads, in one-letter code: MSQGAMRAVVPIIPFLLVLVGVSGVPTNVSSTTQPQLQTTGRPSHEAPNMTQTGTTDSPTAISLTTPDHTPPMPSIGLEEEEEEEGAGDGEHLEGGDGTRDTLPQSPGPAFPLAEDVEKDKPNRPVVPSPDPNNSPARPETSRPKTPPTIIGPLATRPTTRLTSKGRPLVPTPQHTPLFSFLTASPALDTLFVVSTVIHTLSFLCIGAMATHLCGGWSRRGRRTHPSVRYVCLPSERG.

The first 24 residues, 1–24 (MSQGAMRAVVPIIPFLLVLVGVSG), serve as a signal peptide directing secretion. Residues 25–189 (VPTNVSSTTQ…SFLTASPALD (165 aa)) are Virion surface-facing. 2 N-linked (GlcNAc...) asparagine; by host glycosylation sites follow: asparagine 28 and asparagine 49. Composition is skewed to polar residues over residues 28 to 42 (NVSSTTQPQLQTTGR) and 49 to 68 (NMTQTGTTDSPTAISLTTPD). A disordered region spans residues 28–171 (NVSSTTQPQL…LTSKGRPLVP (144 aa)). Positions 78 to 88 (LEEEEEEEGAG) are enriched in acidic residues. A compositionally biased stretch (basic and acidic residues) spans 89-100 (DGEHLEGGDGTR). The helical transmembrane segment at 190-210 (TLFVVSTVIHTLSFLCIGAMA) threads the bilayer. Over 211–238 (THLCGGWSRRGRRTHPSVRYVCLPSERG) the chain is Intravirion.

The protein belongs to the alphaherpesvirinae glycoprotein G family.

Its subcellular location is the virion membrane. Chemokine-binding protein that inhibits neutrophils' chemotaxis. This chain is Envelope glycoprotein G (gG), found in Human herpesvirus 1 (strain 17) (HHV-1).